We begin with the raw amino-acid sequence, 419 residues long: Putative L-glutamine:3-amino-2,3-dideoxy-scyllo-inosose aminotransferase (419 aa).

Lysine 199 is modified (N6-(pyridoxal phosphate)lysine).

The protein belongs to the DegT/DnrJ/EryC1 family. L-glutamine:2-deoxy-scyllo-inosose/scyllo-inosose aminotransferase subfamily. The cofactor is pyridoxal 5'-phosphate.

The enzyme catalyses 3-amino-2,3-dideoxy-scyllo-inosose + L-glutamine = 2-deoxystreptamine + 2-oxoglutaramate. It functions in the pathway metabolic intermediate biosynthesis; 2-deoxystreptamine biosynthesis; 2-deoxystreptamine from D-glucose 6-phosphate: step 4/4. The protein operates within antibiotic biosynthesis; kanamycin biosynthesis. Catalyzes the transamination of 3-amino-2,3-dideoxy-scyllo-inosose (amino-DOI) into 2-deoxystreptamine (DOS). This is Putative L-glutamine:3-amino-2,3-dideoxy-scyllo-inosose aminotransferase (kanD) from Streptomyces kanamyceticus.